Here is a 538-residue protein sequence, read N- to C-terminus: CTP synthase (538 aa).

Residues 1-266 (MKTKFIFVTG…DDQVVDKLNI (266 aa)) are amidoligase domain. Position 14 (Ser14) interacts with CTP. Ser14 contributes to the UTP binding site. ATP-binding positions include 15–20 (SIGKGL) and Asp72. The Mg(2+) site is built by Asp72 and Glu140. CTP contacts are provided by residues 147-149 (DIE), 187-192 (KTKPTQ), and Lys223. Residues 187-192 (KTKPTQ) and Lys223 contribute to the UTP site. A Glutamine amidotransferase type-1 domain is found at 292–534 (HIAIVGKYVN…IAAALEHRGK (243 aa)). Position 354 (Gly354) interacts with L-glutamine. Cys381 acts as the Nucleophile; for glutamine hydrolysis in catalysis. L-glutamine contacts are provided by residues 382-385 (LGMQ), Glu405, and Arg462. Residues His507 and Glu509 contribute to the active site.

It belongs to the CTP synthase family. As to quaternary structure, homotetramer.

It carries out the reaction UTP + L-glutamine + ATP + H2O = CTP + L-glutamate + ADP + phosphate + 2 H(+). The enzyme catalyses L-glutamine + H2O = L-glutamate + NH4(+). The catalysed reaction is UTP + NH4(+) + ATP = CTP + ADP + phosphate + 2 H(+). It functions in the pathway pyrimidine metabolism; CTP biosynthesis via de novo pathway; CTP from UDP: step 2/2. With respect to regulation, allosterically activated by GTP, when glutamine is the substrate; GTP has no effect on the reaction when ammonia is the substrate. The allosteric effector GTP functions by stabilizing the protein conformation that binds the tetrahedral intermediate(s) formed during glutamine hydrolysis. Inhibited by the product CTP, via allosteric rather than competitive inhibition. Functionally, catalyzes the ATP-dependent amination of UTP to CTP with either L-glutamine or ammonia as the source of nitrogen. Regulates intracellular CTP levels through interactions with the four ribonucleotide triphosphates. The chain is CTP synthase from Geobacter metallireducens (strain ATCC 53774 / DSM 7210 / GS-15).